A 517-amino-acid polypeptide reads, in one-letter code: Pentatricopeptide repeat-containing protein At1g13040, mitochondrial (517 aa).

A mitochondrion-targeting transit peptide spans 1–57; the sequence is MHQTLGAVRLAYRSRIANLVKSGMIDNAVQVFDEMRHSSYRVFSFDYNRFIGVLVRE. 14 PPR repeats span residues 8 to 42, 43 to 77, 78 to 112, 113 to 147, 148 to 182, 183 to 218, 219 to 253, 254 to 288, 289 to 320, 324 to 358, 359 to 393, 394 to 428, 429 to 463, and 464 to 498; these read VRLA…SYRV, FSFD…GFSL, IPFT…GFIP, DIWA…GREP, DVVS…GVSP, DNKA…RVKL, STVV…GCEP, DLVT…GIQL, DAYS…MEPR, DVVS…GMVM, NVVT…GLSP, DRIF…EITP, DAIS…ECCP, and DELT…GFTL.

It belongs to the PPR family. P subfamily.

It is found in the mitochondrion. This chain is Pentatricopeptide repeat-containing protein At1g13040, mitochondrial, found in Arabidopsis thaliana (Mouse-ear cress).